We begin with the raw amino-acid sequence, 87 residues long: Small ribosomal subunit protein uS17 (87 aa).

The protein belongs to the universal ribosomal protein uS17 family. In terms of assembly, part of the 30S ribosomal subunit.

Its function is as follows. One of the primary rRNA binding proteins, it binds specifically to the 5'-end of 16S ribosomal RNA. The sequence is that of Small ribosomal subunit protein uS17 from Alcanivorax borkumensis (strain ATCC 700651 / DSM 11573 / NCIMB 13689 / SK2).